We begin with the raw amino-acid sequence, 141 residues long: Sperm-associated microtubule inner protein 10 (141 aa).

Positions 1-16 (MASEKDDGPALPKLDD) are enriched in basic and acidic residues. Residues 1 to 33 (MASEKDDGPALPKLDDDNQTAENTCKPAEEQPQ) are disordered.

In terms of assembly, microtubule inner protein component of sperm flagellar doublet microtubules. Expressed predominantly in the testis.

It localises to the cytoplasm. Its subcellular location is the cytoskeleton. The protein resides in the flagellum axoneme. Its function is as follows. Microtubule inner protein (MIP) part of the dynein-decorated doublet microtubules (DMTs) in flagellum axoneme, which is required for flagellum beating. May serve to reinforce and thus stabilize the microtubule structure in the sperm flagella. Involved in the regulation of sperm motility. The chain is Sperm-associated microtubule inner protein 10 (Spmip10) from Mus musculus (Mouse).